The primary structure comprises 239 residues: RNA polymerase sigma-35 factor (239 aa).

Residues 1-27 (MMKLKFYLVYLWYKVLLKLGIKTDEIY) constitute a propeptide that is removed on maturation. Positions 86–99 (DLISIGTIGLIKAV) match the Polymerase core binding motif. Residues 206 to 225 (QKDVADMLGISQSYISRLEK) constitute a DNA-binding region (H-T-H motif).

This sequence belongs to the sigma-70 factor family. Proteolytically cleaved in the N-terminus probably by a SpoIIGA homolog to yield the active peptide.

Functionally, sigma factors are initiation factors that promote the attachment of RNA polymerase to specific initiation sites and are then released. This sigma factor directs the transcription of crystal protein genes, a sporulation-regulated event. This Bacillus anthracis protein is RNA polymerase sigma-35 factor (sigE).